Consider the following 493-residue polypeptide: MTTLTDLTLAEARDALLNKDFSAVELVKAQLAEIEQARALNAFIKETPEKALAMAEASDARIARGEAGPLEGVPLGIKDLYCTEGVETTAASHILEGFKPAYESTVSANLWRDGAVMLGKLNLDEFAMGSSNETSYFGPVVSPWRRKGSDARIVPGGSSGGSAAAVAARLCFGATATDTGGSIRQPAAFTGTVGIKPTYGRCSRWGIVAFASSLDQAGPIARTVRDAAILMRSMAGHDPKDTTSVDAPVPDYEATLSRGVKGMKIGIPKEYRIEGVPAEIDALWGQGVEWLKDAGATIVDISLPHTRYALPAYYIVAPAEASSNLARYDGVRYGLRVPGKDIVGMYEATRAAGFGKEVRRRIMIGAYVLSAGYYDAYYVRAQKIRTLIKQDFDRAYADGVDAILTPATPSAAFGFGEKGSGDPVEMYLNDVFTVTVNMAGLPGLAVPAGVSAEGLPLGLQLIGRPFDEETLFALASVIEKAAPKIAPPPKWWA.

Catalysis depends on charge relay system residues lysine 78 and serine 158. Serine 182 serves as the catalytic Acyl-ester intermediate.

Belongs to the amidase family. GatA subfamily. In terms of assembly, heterotrimer of A, B and C subunits.

The catalysed reaction is L-glutamyl-tRNA(Gln) + L-glutamine + ATP + H2O = L-glutaminyl-tRNA(Gln) + L-glutamate + ADP + phosphate + H(+). Functionally, allows the formation of correctly charged Gln-tRNA(Gln) through the transamidation of misacylated Glu-tRNA(Gln) in organisms which lack glutaminyl-tRNA synthetase. The reaction takes place in the presence of glutamine and ATP through an activated gamma-phospho-Glu-tRNA(Gln). The sequence is that of Glutamyl-tRNA(Gln) amidotransferase subunit A from Methylocella silvestris (strain DSM 15510 / CIP 108128 / LMG 27833 / NCIMB 13906 / BL2).